Reading from the N-terminus, the 495-residue chain is Cobyric acid synthase (495 aa).

The GATase cobBQ-type domain maps to 253–446; that stretch reads KISIAIVYFP…FHGIFDGSAF (194 aa). Catalysis depends on C334, which acts as the Nucleophile. H438 is an active-site residue.

It belongs to the CobB/CobQ family. CobQ subfamily.

It functions in the pathway cofactor biosynthesis; adenosylcobalamin biosynthesis. In terms of biological role, catalyzes amidations at positions B, D, E, and G on adenosylcobyrinic A,C-diamide. NH(2) groups are provided by glutamine, and one molecule of ATP is hydrogenolyzed for each amidation. This Chlorobium phaeobacteroides (strain BS1) protein is Cobyric acid synthase.